Consider the following 461-residue polypeptide: Coronin-1A (461 aa).

Residue serine 2 is modified to N-acetylserine. Position 2 is a phosphoserine; by PKC (serine 2). WD repeat units follow at residues 13-63, 73-110, 123-160, 164-204, 207-251, 258-296, and 302-349; these read HVFG…LVLP, NVPMVCGHTAPVLDIAWCPHNDNVIASGSEDCSVMVWE, PVVTLEGHTKRVGIVAWHPTAQNVLLSAGCDNVILVWD, GVAV…RIIE, KGTI…ALWD, PLSLQELDTSSGVLLPFFDPDTNIVYLCGKGDSSIRYFE, and PFLH…EPIA. A compositionally biased stretch (basic and acidic residues) spans 404–418; it reads LRVNRGLDTGRKRTT. The disordered stretch occupies residues 404–429; it reads LRVNRGLDTGRKRTTPEASGAPSSDA. Threonine 412 bears the Phosphothreonine; by PKC mark. At threonine 418 the chain carries Phosphothreonine. A Phosphoserine modification is found at serine 422. A coiled-coil region spans residues 424–460; that stretch reads APSSDAISRLEEEMRKLQATVQELQKRLDRLEETVQA. The residue at position 449 (lysine 449) is an N6-acetyllysine.

This sequence belongs to the WD repeat coronin family. Binds actin. Phosphorylation at Thr-412 by PKC strongly down-regulates the association with actin. Post-translationally, polyubiquitinated by RNF128 with 'Lys-48'-linked chains, leading to proteasomal degradation. Expressed in brain, thymus, spleen, bone marrow and lymph node. Low in lung and gut.

The protein resides in the cytoplasm. Its subcellular location is the cytoskeleton. It is found in the cell cortex. It localises to the cytoplasmic vesicle. The protein localises to the phagosome membrane. Functionally, may be a crucial component of the cytoskeleton of highly motile cells, functioning both in the invagination of large pieces of plasma membrane, as well as in forming protrusions of the plasma membrane involved in cell locomotion. In mycobacteria-infected macrophages, its retention on the phagosomal membrane prevents fusion between phagosomes and lysosomes. This Bos taurus (Bovine) protein is Coronin-1A (CORO1A).